The chain runs to 604 residues: Serine protease 56 (604 aa).

An N-terminal signal peptide occupies residues M1–G22. Residues C70–E94 form a disordered region. Residues R75–P89 are compositionally biased toward pro residues. N101 is a glycosylation site (N-linked (GlcNAc...) asparagine). In terms of domain architecture, Peptidase S1 spans I109 to S341. The cysteines at positions 134 and 150 are disulfide-linked. Active-site charge relay system residues include H149 and D195. Disulfide bonds link C229–C296, C260–C275, and C286–C317. The active-site Charge relay system is S290. Disordered stretches follow at residues R424–Q452 and P578–P604.

Belongs to the peptidase S1 family. Expressed in the eye: present in the retina and in the optic nerve.

It localises to the endoplasmic reticulum membrane. Its function is as follows. Serine protease required during eye development. The chain is Serine protease 56 (Prss56) from Mus musculus (Mouse).